The following is a 624-amino-acid chain: Chaperone protein HtpG (624 aa).

An a; substrate-binding region spans residues 1–341 (MAVKQFKAES…SPDLSLNISR (341 aa)). The segment at 342-550 (ELLQHDRQLK…DGELSIEMEK (209 aa)) is b. The c stretch occupies residues 551–624 (VLKMMPDNNN…FANDVASLMK (74 aa)).

Belongs to the heat shock protein 90 family. As to quaternary structure, homodimer.

The protein localises to the cytoplasm. Molecular chaperone. Has ATPase activity. This chain is Chaperone protein HtpG, found in Clostridium acetobutylicum (strain ATCC 824 / DSM 792 / JCM 1419 / IAM 19013 / LMG 5710 / NBRC 13948 / NRRL B-527 / VKM B-1787 / 2291 / W).